A 99-amino-acid polypeptide reads, in one-letter code: Large ribosomal subunit protein P1 (99 aa).

Part of the 50S ribosomal subunit. Homodimer, it forms part of the ribosomal stalk which helps the ribosome interact with GTP-bound translation factors. Forms both a pentameric uL10/P0(P1)2(P1)2 and heptameric uL10/P0(P1)2(P1)2(P1)2 complex, where uL10/P0 forms an elongated spine to which the P1 dimers bind in a sequential fashion. The proportion of heptameric complexes increases during cell growth.

Its function is as follows. Forms part of the ribosomal stalk, playing a central role in the interaction of the ribosome with GTP-bound translation factors. The chain is Large ribosomal subunit protein P1 from Methanococcus vannielii.